The sequence spans 882 residues: DNA mismatch repair protein MutS (882 aa).

ATP is bound at residue glycine 627–serine 634.

The protein belongs to the DNA mismatch repair MutS family.

In terms of biological role, this protein is involved in the repair of mismatches in DNA. It is possible that it carries out the mismatch recognition step. This protein has a weak ATPase activity. The polypeptide is DNA mismatch repair protein MutS (Anaeromyxobacter sp. (strain K)).